A 606-amino-acid chain; its full sequence is Retrovirus-related Pol polyprotein from type-1 retrotransposable element R2 (606 aa).

The Reverse transcriptase domain occupies 1–208; the sequence is GTLANIIMLE…NTFKYLGLTF (208 aa). The tract at residues 331–606 is nucleic acid-binding endonuclease; it reads IFNIEGPARS…PPDPPRPVPP (276 aa).

The enzyme catalyses DNA(n) + a 2'-deoxyribonucleoside 5'-triphosphate = DNA(n+1) + diphosphate. The protein is Retrovirus-related Pol polyprotein from type-1 retrotransposable element R2 of Popillia japonica (Japanese beetle).